Reading from the N-terminus, the 155-residue chain is Large ribosomal subunit protein eL24A (155 aa).

Phosphoserine is present on S7. Residues 66–155 are disordered; the sequence is EVAKKRSRKT…AFQKVAATSR (90 aa). Basic and acidic residues predominate over residues 89–129; sequence LIKERRSLKPEVRKANREEKLKANKEKKKAEKAARKAEKAK. Polar residues predominate over residues 131–142; that stretch reads AGTQSSKFSKQQ.

Belongs to the eukaryotic ribosomal protein eL24 family. In terms of assembly, component of the large ribosomal subunit (LSU). Mature yeast ribosomes consist of a small (40S) and a large (60S) subunit. The 40S small subunit contains 1 molecule of ribosomal RNA (18S rRNA) and 33 different proteins (encoded by 57 genes). The large 60S subunit contains 3 rRNA molecules (25S, 5.8S and 5S rRNA) and 46 different proteins (encoded by 81 genes).

It is found in the cytoplasm. Component of the ribosome, a large ribonucleoprotein complex responsible for the synthesis of proteins in the cell. The small ribosomal subunit (SSU) binds messenger RNAs (mRNAs) and translates the encoded message by selecting cognate aminoacyl-transfer RNA (tRNA) molecules. The large subunit (LSU) contains the ribosomal catalytic site termed the peptidyl transferase center (PTC), which catalyzes the formation of peptide bonds, thereby polymerizing the amino acids delivered by tRNAs into a polypeptide chain. The nascent polypeptides leave the ribosome through a tunnel in the LSU and interact with protein factors that function in enzymatic processing, targeting, and the membrane insertion of nascent chains at the exit of the ribosomal tunnel. This is Large ribosomal subunit protein eL24A from Saccharomyces cerevisiae (strain ATCC 204508 / S288c) (Baker's yeast).